Consider the following 224-residue polypeptide: tRNA (guanine-N(7)-)-methyltransferase (224 aa).

4 residues coordinate S-adenosyl-L-methionine: glutamate 54, glutamate 79, aspartate 106, and aspartate 129. The active site involves aspartate 129. Substrate contacts are provided by lysine 133 and aspartate 165.

Belongs to the class I-like SAM-binding methyltransferase superfamily. TrmB family.

The catalysed reaction is guanosine(46) in tRNA + S-adenosyl-L-methionine = N(7)-methylguanosine(46) in tRNA + S-adenosyl-L-homocysteine. It functions in the pathway tRNA modification; N(7)-methylguanine-tRNA biosynthesis. Functionally, catalyzes the formation of N(7)-methylguanine at position 46 (m7G46) in tRNA. In Chlamydia felis (strain Fe/C-56) (Chlamydophila felis), this protein is tRNA (guanine-N(7)-)-methyltransferase.